The sequence spans 470 residues: Annexin C1 (470 aa).

The tract at residues 1 to 143 (MYGQQNNYGA…QGQSPMMYLG (143 aa)) is disordered. The span at 15–34 (QWGQAPPQGYQPGYQNGPPA) shows a compositional bias: low complexity. Residues 82 to 92 (PQPPFGAPSPA) are compositionally biased toward pro residues. Low complexity-rich tracts occupy residues 93–110 (PAGYGAPPTAPQGQYGAP) and 128–138 (GYGSQPQGQSP). Annexin repeat units lie at residues 161–232 (YDAR…LLSL), 233–304 (GPLG…MALS), 316–388 (QLVQ…FIAR), and 395–468 (DGVV…GIIE).

It belongs to the annexin family.

Functionally, does not appear to play a major role in virulence. May play a role in titan cell formation. This Cryptococcus neoformans var. grubii serotype A (strain H99 / ATCC 208821 / CBS 10515 / FGSC 9487) (Filobasidiella neoformans var. grubii) protein is Annexin C1.